Consider the following 234-residue polypeptide: NLP effector protein 1 (234 aa).

An N-terminal signal peptide occupies residues 1–18; that stretch reads MQLRAFISVFASLACVNA. An N-linked (GlcNAc...) asparagine glycan is attached at Asn-66. The Conserved undecapeptide motif I motif lies at 102-112; the sequence is AFMYSWYMPKD. The Hepta-peptide GHRHDWE motif II signature appears at 119-125; it reads GHRHDWE.

It belongs to the Necrosis inducing protein (NPP1) family.

The protein localises to the secreted. In terms of biological role, secreted effector that contributes to virulence during infection by P.capsici. Induces distinct chlorosis at 3 days after inoculation of host C.annuum leaves, and all the chlorotic areas gradually turn brown and become moderately necrotic at 7 days after inoculation. Leads only to chlorotic areas, without necrosis at 7 days after non-host N.benthamiana leaves infection. Induces cell death in hot pepper. This chain is NLP effector protein 1, found in Phytophthora capsici.